A 305-amino-acid chain; its full sequence is P2Y purinoceptor 14 (305 aa).

Over 1–29 the chain is Extracellular; that stretch reads MDNTTTTEPPKQPCTRNTLITQQIIPMLY. N3 carries N-linked (GlcNAc...) asparagine glycosylation. The helical transmembrane segment at 30-50 threads the bilayer; sequence CVVFITGVLLNGISGWIFFYV. The Cytoplasmic portion of the chain corresponds to 51–55; sequence PSSKS. The helical transmembrane segment at 56–76 threads the bilayer; that stretch reads FIIYLKNIVVADFLMGLTFPF. Topologically, residues 77–96 are extracellular; sequence KVLSDSGLGPWQLNVFVFRV. Residues 97-117 traverse the membrane as a helical segment; sequence SAVIFYVNMYVSIAFFGLISF. Residues 118–139 are Cytoplasmic-facing; that stretch reads DRYYKIVKPLLVSIVQSVNYSK. The helical transmembrane segment at 140–160 threads the bilayer; it reads VLSVLVWVLMLLLAVPNIILT. The N-linked (GlcNAc...) asparagine glycan is linked to N161. At 161-188 the chain is on the extracellular side; the sequence is NQSVKDVTNIQCMELKNELGRKWHKASN. The helical transmembrane segment at 189 to 209 threads the bilayer; sequence YVFVSIFWIVFLLLTVFYMAI. At 210–234 the chain is on the cytoplasmic side; it reads TRKIFKSHLKSRKNSISVKRKSSRN. A helical transmembrane segment spans residues 235–255; sequence IFSIVLAFVACFAPYHVARIP. The Extracellular portion of the chain corresponds to 256-278; the sequence is YTKSQTEGHYSCQAKETLLYTKE. The helical transmembrane segment at 279–299 threads the bilayer; it reads FTLLLSAANVCLDPISISSYA. Over 300–305 the chain is Cytoplasmic; it reads SRLEKS.

It belongs to the G-protein coupled receptor 1 family.

It localises to the cell membrane. In terms of biological role, receptor for UDP-glucose coupled to G-proteins. This Rattus norvegicus (Rat) protein is P2Y purinoceptor 14 (P2ry14).